The sequence spans 114 residues: Large ribosomal subunit protein bL20c (114 aa).

It belongs to the bacterial ribosomal protein bL20 family.

It is found in the plastid. It localises to the chloroplast. Binds directly to 23S ribosomal RNA and is necessary for the in vitro assembly process of the 50S ribosomal subunit. It is not involved in the protein synthesizing functions of that subunit. This is Large ribosomal subunit protein bL20c from Psilotum nudum (Whisk fern).